Consider the following 279-residue polypeptide: Dermonecrotic toxin LspiSicTox-betaIE3ii (279 aa).

Residue H5 is part of the active site. Mg(2+)-binding residues include E25 and D27. Residue H41 is the Nucleophile of the active site. Disulfide bonds link C45-C51 and C47-C190. D85 serves as a coordination point for Mg(2+).

The protein belongs to the arthropod phospholipase D family. Class II subfamily. Mg(2+) is required as a cofactor. Expressed by the venom gland.

It localises to the secreted. The catalysed reaction is an N-(acyl)-sphingosylphosphocholine = an N-(acyl)-sphingosyl-1,3-cyclic phosphate + choline. The enzyme catalyses an N-(acyl)-sphingosylphosphoethanolamine = an N-(acyl)-sphingosyl-1,3-cyclic phosphate + ethanolamine. It catalyses the reaction a 1-acyl-sn-glycero-3-phosphocholine = a 1-acyl-sn-glycero-2,3-cyclic phosphate + choline. It carries out the reaction a 1-acyl-sn-glycero-3-phosphoethanolamine = a 1-acyl-sn-glycero-2,3-cyclic phosphate + ethanolamine. In terms of biological role, dermonecrotic toxins cleave the phosphodiester linkage between the phosphate and headgroup of certain phospholipids (sphingolipid and lysolipid substrates), forming an alcohol (often choline) and a cyclic phosphate. This toxin acts on sphingomyelin (SM). It may also act on ceramide phosphoethanolamine (CPE), lysophosphatidylcholine (LPC) and lysophosphatidylethanolamine (LPE), but not on lysophosphatidylserine (LPS), and lysophosphatidylglycerol (LPG). It acts by transphosphatidylation, releasing exclusively cyclic phosphate products as second products. Induces dermonecrosis, hemolysis, increased vascular permeability, edema, inflammatory response, and platelet aggregation. The sequence is that of Dermonecrotic toxin LspiSicTox-betaIE3ii from Loxosceles spinulosa (Recluse spider).